A 695-amino-acid chain; its full sequence is Phenoloxidase subunit 2 (695 aa).

Cu cation-binding residues include His215, His219, and His245. Glu353 acts as the Proton acceptor in catalysis. The Cu cation site is built by His368, His372, and His408. 2 disulfides stabilise this stretch: Cys586/Cys630 and Cys588/Cys637.

Heterodimer. Forms a complex with an interleukin 1-like protein as a consequence of a host defense response. Requires Cu(2+) as cofactor. Post-translationally, the N-terminus is blocked. In terms of tissue distribution, synthesized by oenocytoids, a type of hemocyte, and released into the hemolymph plasma.

It is found in the secreted. It carries out the reaction 2 L-dopa + O2 = 2 L-dopaquinone + 2 H2O. The catalysed reaction is L-tyrosine + O2 = L-dopaquinone + H2O. Activated by immulectin and lipopolysaccharide. This is a copper-containing oxidase that functions in the formation of pigments such as melanins and other polyphenolic compounds. Catalyzes the rate-limiting conversions of tyrosine to DOPA, DOPA to DOPA-quinone and possibly 5,6 dihydroxyindole to indole-5'6 quinone. Binds to the surface of hemocytes and is involved in hemocyte melanization. In Manduca sexta (Tobacco hawkmoth), this protein is Phenoloxidase subunit 2.